A 215-amino-acid polypeptide reads, in one-letter code: E3 ubiquitin-protein ligase NleG (215 aa).

An RING/U-box domain region spans residues 136–189; sequence CPITLCIPETGVFVRNAKNSEICSLYDHNALTELIRRNAPHPLSREPFVPEMIV. The short motif at 213 to 215 is the PDZ-binding motif element; the sequence is TRI.

The protein belongs to the NleG E3 ligase family. In terms of assembly, interacts with host GOPC (human protein). In terms of processing, two sizes of protein are detected upon expression in C.rodentium; only the smaller protein is secreted.

The protein localises to the secreted. It localises to the host cytoplasm. The enzyme catalyses S-ubiquitinyl-[E2 ubiquitin-conjugating enzyme]-L-cysteine + [acceptor protein]-L-lysine = [E2 ubiquitin-conjugating enzyme]-L-cysteine + N(6)-ubiquitinyl-[acceptor protein]-L-lysine.. In terms of biological role, effector proteins function to alter host cell physiology and promote bacterial survival in host tissues. This protein is an E3 ubiquitin-protein ligase that probably interferes with the host's ubiquitination pathway and targets host proteins for proteasomal degradation. Can ubiquitinate ubiquitin, giving rise to polyubiquitin chains (in vitro). Does not complement an nleG8 deletion in C.rodentium. This chain is E3 ubiquitin-protein ligase NleG, found in Escherichia coli O157:H7.